A 359-amino-acid polypeptide reads, in one-letter code: Replication-associated protein (359 aa).

Residues 18–121 enclose the CRESS-DNA virus Rep endonuclease domain; that stretch reads RHRNANTFLT…PKDKWEKGTY (104 aa). The RCR-1 signature appears at 25 to 28; the sequence is FLTY. A divalent metal cation is bound by residues Glu59, His67, and His69. The RCR-2 signature appears at 67 to 69; sequence HCH. The active-site For DNA cleavage activity is the Tyr107. The RCR-3 motif lies at 107-110; sequence YILK. Asp111 serves as a coordination point for a divalent metal cation. An oligomerization region spans residues 181–193; the sequence is SASRLFPDIAEPY. 235 to 242 lines the ATP pocket; sequence GPTRTGKT. Positions 258 to 276 are transactivation; the sequence is IDWSSYDEEAQYNVVDDIP. The short motif at 298-309 is the Nuclear localization signal element; the sequence is KYGKRRKVASKS.

Belongs to the geminiviridae Rep protein family. Homooligomer. Rep binds to repeated DNA motifs (iterons). Forms the O-complex, which is a Rep-DNA complex involved in the initiation of RCR. Part of the C- and V-complexes which are RepA-Rep-DNA complexes involved in the c-sense and v-sense transcription. It depends on Mg(2+) as a cofactor. Mn(2+) serves as cofactor.

The protein resides in the host nucleus. Functionally, essential for the replication of viral ssDNA. The closed circular ssDNA genome is first converted to a superhelical dsDNA. Rep binds a specific region at the genome origin of replication. It introduces an endonucleolytic nick within the conserved sequence 5'-TAATATTAC-3' in the intergenic region of the genome present in all geminiviruses, thereby initiating the rolling circle replication (RCR). Following cleavage, binds covalently to the 5'-phosphate of DNA as a tyrosyl ester. The cleavage gives rise to a free 3'-OH that serves as a primer for the cellular DNA polymerase. The polymerase synthesizes the (+) strand DNA by rolling circle mechanism. After one round of replication, a Rep-catalyzed nucleotidyl transfer reaction releases a circular single-stranded virus genome, thereby terminating the replication. Displays origin-specific DNA cleavage, nucleotidyl transferase, ATPase and helicase activities. Acts as an inhibitor of C-sense gene transcription. The polypeptide is Replication-associated protein (Megathyrsus maximus (PanSV)).